Consider the following 120-residue polypeptide: Immunoglobulin kappa variable 2D-26 (120 aa).

The N-terminal stretch at 1–20 (MRLPAQLLGLLMLWVPGSSA) is a signal peptide. The segment at 21 to 43 (EIVMTQTPLSLSITPGEQASMSC) is framework-1. The 100-residue stretch at 21–120 (EIVMTQTPLS…YYCMQDAQDP (100 aa)) folds into the Ig-like domain. A disulfide bridge connects residues Cys-43 and Cys-113. Residues 44-59 (RSSQSLLHSDGYTYLY) form a complementarity-determining-1 region. Residues 60 to 74 (WFLQKARPVSTLLIY) are framework-2. Residues 75 to 81 (EVSNRFS) are complementarity-determining-2. The tract at residues 82-113 (GVPDRFSGSGSGTDFTLKISRVEAEDFGVYYC) is framework-3. The tract at residues 114-120 (MQDAQDP) is complementarity-determining-3.

Immunoglobulins are composed of two identical heavy chains and two identical light chains; disulfide-linked.

Its subcellular location is the secreted. The protein resides in the cell membrane. In terms of biological role, v region of the variable domain of immunoglobulin light chains that participates in the antigen recognition. Immunoglobulins, also known as antibodies, are membrane-bound or secreted glycoproteins produced by B lymphocytes. In the recognition phase of humoral immunity, the membrane-bound immunoglobulins serve as receptors which, upon binding of a specific antigen, trigger the clonal expansion and differentiation of B lymphocytes into immunoglobulins-secreting plasma cells. Secreted immunoglobulins mediate the effector phase of humoral immunity, which results in the elimination of bound antigens. The antigen binding site is formed by the variable domain of one heavy chain, together with that of its associated light chain. Thus, each immunoglobulin has two antigen binding sites with remarkable affinity for a particular antigen. The variable domains are assembled by a process called V-(D)-J rearrangement and can then be subjected to somatic hypermutations which, after exposure to antigen and selection, allow affinity maturation for a particular antigen. This Homo sapiens (Human) protein is Immunoglobulin kappa variable 2D-26.